The primary structure comprises 427 residues: 3-phosphoshikimate 1-carboxyvinyltransferase (427 aa).

3-phosphoshikimate-binding residues include Lys-20, Ser-21, and Arg-25. Residue Lys-20 participates in phosphoenolpyruvate binding. Phosphoenolpyruvate-binding residues include Gly-92 and Arg-120. The 3-phosphoshikimate site is built by Ser-166, Gln-168, Asp-312, and Lys-339. Residue Gln-168 coordinates phosphoenolpyruvate. The active-site Proton acceptor is Asp-312. Phosphoenolpyruvate is bound by residues Arg-343 and Arg-385.

The protein belongs to the EPSP synthase family. As to quaternary structure, monomer.

It localises to the cytoplasm. It catalyses the reaction 3-phosphoshikimate + phosphoenolpyruvate = 5-O-(1-carboxyvinyl)-3-phosphoshikimate + phosphate. It functions in the pathway metabolic intermediate biosynthesis; chorismate biosynthesis; chorismate from D-erythrose 4-phosphate and phosphoenolpyruvate: step 6/7. Its function is as follows. Catalyzes the transfer of the enolpyruvyl moiety of phosphoenolpyruvate (PEP) to the 5-hydroxyl of shikimate-3-phosphate (S3P) to produce enolpyruvyl shikimate-3-phosphate and inorganic phosphate. The sequence is that of 3-phosphoshikimate 1-carboxyvinyltransferase from Streptococcus agalactiae serotype III (strain NEM316).